The sequence spans 210 residues: uncharacterized protein (210 aa).

A run of 5 helical transmembrane segments spans residues 42-62 (ITLGIAFWGMLSMLGLAVLFV), 66-86 (ALHGVIMLLGGSYLAYLGFLM), 126-146 (VVVYFSSVMSLVLVNITEMWQ), 147-167 (IILAFAVIVVETFCYFYVISL), and 189-209 (AGIVFLFFGCVLVYNGINEII).

It belongs to the Rht family.

It is found in the cell membrane. This is an uncharacterized protein from Haemophilus influenzae (strain ATCC 51907 / DSM 11121 / KW20 / Rd).